The sequence spans 673 residues: uncharacterized protein (673 aa).

Residues 1–208 (MSTHSNDYFS…STGQLELPPD (208 aa)) are Cytoplasmic-facing. Residues Ser-57, Ser-112, and Ser-172 each carry the phosphoserine modification. Residues 209-229 (GGYGWVVTFCVFLTMFSTWGC) form a helical membrane-spanning segment. N-linked (GlcNAc...) asparagine glycosylation occurs at Asn-230. Over 230-255 (NASFGVDLAYYLNHDTYPGASKYDYA) the chain is Lumenal. Residues 256 to 276 (LIAGLTVFLGQLLSPLVMALM) traverse the membrane as a helical segment. Position 277 (Arg-277) is a topological domain, cytoplasmic. Residues 278–298 (IIGLRTTMLFGDAVMLAAYLL) traverse the membrane as a helical segment. Over 299-315 (ASFTTKLWQLYVTQGFM) the chain is Lumenal. Residues 316–336 (VGCSISLIFVPATTVLPGWFL) form a helical membrane-spanning segment. Over 337-339 (KKR) the chain is Cytoplasmic. A helical membrane pass occupies residues 340 to 360 (AVAMGVSLLGTGAGGVVYGLA). The Lumenal portion of the chain corresponds to 361 to 372 (TNKMLSDFGNTR). The chain crosses the membrane as a helical span at residues 373-393 (WCLRIIGISCSISVLVAIALL). The Cytoplasmic portion of the chain corresponds to 394–426 (KERNPTPAIGLKSPRAMFEQLKAMFSLKVITKP). A helical transmembrane segment spans residues 427 to 447 (FVVLIALWFMFALFAYNMMVF). The Lumenal segment spans residues 448–504 (TLSSYAISKGLSSHDASTLTAILNGSQSIGRPLMGLAGDKFGRANVTIVLTTLLTIY). Residues Asn-471 and Asn-492 are each glycosylated (N-linked (GlcNAc...) asparagine). The chain crosses the membrane as a helical span at residues 505-525 (MFAFWIPAHTFVQLIFFSILV). The Cytoplasmic segment spans residues 526–549 (GSCVGVANVMNTVLIADMVKPEEF). Residues 550 to 570 (LPAWAFVNYCGAPFLLVCEVI) traverse the membrane as a helical segment. Residues 571–584 (AQALTVEKDKSNPY) are Lumenal-facing. A helical membrane pass occupies residues 585–605 (LHAQIFCGCCFIAALILISIL). Topologically, residues 606-673 (REYSIRMKLT…FLRMVYPMKV (68 aa)) are cytoplasmic. Ser-637 is subject to Phosphoserine.

The protein belongs to the major facilitator superfamily. Monocarboxylate porter (TC 2.A.1.13) family.

It is found in the endoplasmic reticulum membrane. This is an uncharacterized protein from Saccharomyces cerevisiae (strain ATCC 204508 / S288c) (Baker's yeast).